The following is a 167-amino-acid chain: Ion-translocating oxidoreductase complex subunit B (167 aa).

The tract at residues 1–22 (MITLIIFSFLSFLLGIILSFTA) is hydrophobic. The 4Fe-4S domain occupies 28–87 (QEDPIVEIVNELLPQSQCAQCGYSGCYPYAKAIVENSEKINKCIPGGTDLISAISSVLSI). [4Fe-4S] cluster contacts are provided by C45, C48, C53, C70, C113, C116, C119, C123, C143, C146, C149, and C153. 2 consecutive 4Fe-4S ferredoxin-type domains span residues 104-133 (NTVLINESNCVGCSKCASFCPVDAIVGAPN) and 134-163 (FIHTVLQEFCTGCNICLLHCPTNCIEIKKE).

This sequence belongs to the 4Fe4S bacterial-type ferredoxin family. RnfB subfamily. The complex is composed of six subunits: RnfA, RnfB, RnfC, RnfD, RnfE and RnfG. It depends on [4Fe-4S] cluster as a cofactor.

The protein resides in the cell inner membrane. Part of a membrane-bound complex that couples electron transfer with translocation of ions across the membrane. The polypeptide is Ion-translocating oxidoreductase complex subunit B (Buchnera aphidicola subsp. Acyrthosiphon pisum (strain Tuc7)).